A 273-amino-acid chain; its full sequence is Rhamnulose-1-phosphate aldolase (273 aa).

Glu117 is an active-site residue. The Zn(2+) site is built by His140, His142, and His211.

This sequence belongs to the aldolase class II family. RhaD subfamily. The cofactor is Zn(2+).

It is found in the cytoplasm. The catalysed reaction is L-rhamnulose 1-phosphate = (S)-lactaldehyde + dihydroxyacetone phosphate. It functions in the pathway carbohydrate degradation; L-rhamnose degradation; glycerone phosphate from L-rhamnose: step 3/3. In terms of biological role, catalyzes the reversible cleavage of L-rhamnulose-1-phosphate to dihydroxyacetone phosphate (DHAP) and L-lactaldehyde. The sequence is that of Rhamnulose-1-phosphate aldolase from Listeria monocytogenes serovar 1/2a (strain ATCC BAA-679 / EGD-e).